The sequence spans 238 residues: tRNA (guanine-N(1)-)-methyltransferase (238 aa).

Residues G109 and 129–134 (IGDFVL) contribute to the S-adenosyl-L-methionine site.

It belongs to the RNA methyltransferase TrmD family. Homodimer.

Its subcellular location is the cytoplasm. It catalyses the reaction guanosine(37) in tRNA + S-adenosyl-L-methionine = N(1)-methylguanosine(37) in tRNA + S-adenosyl-L-homocysteine + H(+). In terms of biological role, specifically methylates guanosine-37 in various tRNAs. The protein is tRNA (guanine-N(1)-)-methyltransferase of Exiguobacterium sp. (strain ATCC BAA-1283 / AT1b).